The chain runs to 89 residues: Nucleoside triphosphatase I (89 aa).

Positions 42–89 (FLGLDKMHSLLLFHDTGVGKTITTTFIIKQLKNIYTNWSILLLVKKHL) constitute a Helicase ATP-binding domain. 55–62 (HDTGVGKT) is an ATP binding site.

The protein belongs to the helicase family. NPH I subfamily.

It catalyses the reaction a ribonucleoside 5'-triphosphate + H2O = a ribonucleoside 5'-diphosphate + phosphate + H(+). Its function is as follows. Serves two roles in transcription; it acts in concert with viral termination factor/capping enzyme to catalyze release of UUUUUNU-containing nascent RNA from the elongation complex, and it acts by itself as a polymerase elongation factor to facilitate readthrough of intrinsic pause sites. The chain is Nucleoside triphosphatase I (NPH1) from Swinepox virus (strain Kasza) (SWPV).